Here is a 332-residue protein sequence, read N- to C-terminus: Cell growth regulator with RING finger domain protein 1 (332 aa).

The segment at 274–309 (CVVCQNGGVNWVLLPCRHACLCDSCVCYFKQCPMCR) adopts an RING-type zinc-finger fold.

Highly expressed in testis, lower levels of expression is seen in skeletal muscle, liver, lung and brain.

The protein localises to the nucleus. Its subcellular location is the endoplasmic reticulum. In terms of biological role, able to inhibit growth in several cell lines. The chain is Cell growth regulator with RING finger domain protein 1 (Cgrrf1) from Rattus norvegicus (Rat).